A 490-amino-acid polypeptide reads, in one-letter code: Subtilisin-like protease 8 (490 aa).

The first 26 residues, 1-26 (MKGLLSLSVLPVLAYASPMIVDSIHQ), serve as a signal peptide directing secretion. A propeptide spanning residues 27 to 134 (NAAPILSSTN…YIERDSEVHT (108 aa)) is cleaved from the precursor. The Inhibitor I9 domain occupies 43 to 134 (SYIVVFKKGV…YIERDSEVHT (92 aa)). The Peptidase S8 domain maps to 144-450 (PWGLARISHR…GGSDDYKKII (307 aa)). Catalysis depends on charge relay system residues D180 and H212. N282 carries an N-linked (GlcNAc...) asparagine glycan. The active-site Charge relay system is the S378. Residue N456 is glycosylated (N-linked (GlcNAc...) asparagine).

This sequence belongs to the peptidase S8 family.

Its subcellular location is the secreted. Secreted subtilisin-like serine protease with keratinolytic activity that contributes to pathogenicity. The polypeptide is Subtilisin-like protease 8 (SUB8) (Arthroderma benhamiae (strain ATCC MYA-4681 / CBS 112371) (Trichophyton mentagrophytes)).